The sequence spans 118 residues: Large ribosomal subunit protein bL20 (118 aa).

The protein belongs to the bacterial ribosomal protein bL20 family.

Its function is as follows. Binds directly to 23S ribosomal RNA and is necessary for the in vitro assembly process of the 50S ribosomal subunit. It is not involved in the protein synthesizing functions of that subunit. The polypeptide is Large ribosomal subunit protein bL20 (Parvibaculum lavamentivorans (strain DS-1 / DSM 13023 / NCIMB 13966)).